A 384-amino-acid chain; its full sequence is FAD-dependent urate hydroxylase (384 aa).

Residues Gly11, 30–31 (EA), Ser43, and Val125 each bind FAD. Substrate contacts are provided by residues Asn178, Arg204, and 216–218 (YFF). Residues Asp285 and 295–299 (GQGGC) each bind FAD.

The protein belongs to the FAD-dependent urate hydroxylase family. Requires FAD as cofactor.

It catalyses the reaction urate + NADH + O2 + H(+) = 5-hydroxyisourate + NAD(+) + H2O. It participates in purine metabolism; urate degradation. Catalyzes the hydroxylation of uric acid to 5-hydroxyisourate. This is FAD-dependent urate hydroxylase (hpxO) from Klebsiella pneumoniae.